The primary structure comprises 112 residues: Class I hydrophobin 7 (112 aa).

Positions methionine 1–alanine 23 are cleaved as a signal peptide. Cystine bridges form between cysteine 36/cysteine 93, cysteine 43/cysteine 87, cysteine 44/cysteine 74, and cysteine 94/cysteine 107. The N-linked (GlcNAc...) asparagine glycan is linked to asparagine 96.

This sequence belongs to the fungal hydrophobin family. As to quaternary structure, self-assembles to form functional amyloid fibrils called rodlets. Self-assembly into fibrillar rodlets occurs spontaneously at hydrophobic:hydrophilic interfaces and the rodlets further associate laterally to form amphipathic monolayers.

Its subcellular location is the secreted. It is found in the cell wall. Aerial growth, conidiation, and dispersal of filamentous fungi in the environment rely upon a capability of their secreting small amphipathic proteins called hydrophobins (HPBs) with low sequence identity. Class I can self-assemble into an outermost layer of rodlet bundles on aerial cell surfaces, conferring cellular hydrophobicity that supports fungal growth, development and dispersal; whereas Class II form highly ordered films at water-air interfaces through intermolecular interactions but contribute nothing to the rodlet structure. This Flammulina velutipes (Agaricus velutipes) protein is Class I hydrophobin 7.